A 314-amino-acid polypeptide reads, in one-letter code: Acetaldehyde dehydrogenase 3 (314 aa).

Catalysis depends on cysteine 132, which acts as the Acyl-thioester intermediate. NAD(+)-binding positions include 163-171 (SAGPGTRAN) and asparagine 291.

The protein belongs to the acetaldehyde dehydrogenase family.

The enzyme catalyses acetaldehyde + NAD(+) + CoA = acetyl-CoA + NADH + H(+). The chain is Acetaldehyde dehydrogenase 3 from Dechloromonas aromatica (strain RCB).